The following is a 379-amino-acid chain: Cathepsin B-like cysteine proteinase 6 (379 aa).

The signal sequence occupies residues 1–16; it reads MKTLLFLSCIVVAAYC. Residues 17–104 constitute a propeptide that is removed on maturation; it reads ACNDNLESVL…LSKTKDLDLD (88 aa). Disulfide bonds link cysteine 118–cysteine 147, cysteine 130–cysteine 174, cysteine 166–cysteine 233, cysteine 167–cysteine 170, cysteine 203–cysteine 237, and cysteine 211–cysteine 223. Cysteine 133 is a catalytic residue. N-linked (GlcNAc...) asparagine glycosylation is present at asparagine 196. An N-linked (GlcNAc...) asparagine; atypical glycan is attached at asparagine 201. Residues histidine 305 and asparagine 325 contribute to the active site.

This sequence belongs to the peptidase C1 family.

The sequence is that of Cathepsin B-like cysteine proteinase 6 (cpr-6) from Caenorhabditis elegans.